The primary structure comprises 429 residues: MSNVAVVGSQWGDEGKGKVVDWLAERADVVVRFQGGHNAGHTLVVDGVTYKLSLLPSGAVRGKLSIIGNGVVVDPWALFEEIERVAAQGVVITPEGLRIAENAVLILPLHGNLDRAREAAAGNAKIGTTGRGIGPAYEDKVARRAIRLCDLADEDVLRFKVERLLTHHNALLRGLGEPELDADSLISALLEIAPRILPFASPVWKVLDEARRAGKKILFEGAQGAMLDVDHGTYPYVTSSNTVAPNAATGAGVGPSSVGFTLGITKAYTTRVGAGPFPTELFDDIGRTIGERGREFGTVTGRPRRCGWFDAVLVRQSVLVGGLRGIALTKLDVLDGLDELKICTGYRLDGQVIDHLPASMKAQSRVEPIYETLEGWKDSTFGARSWADLPAKAIKYIRRLEELIEAPVALLSTSPEREDTILVRDPFLD.

Residues glycine 12–lysine 18 and glycine 40–threonine 42 each bind GTP. The active-site Proton acceptor is the aspartate 13. The Mg(2+) site is built by aspartate 13 and glycine 40. IMP-binding positions include aspartate 13–lysine 16, asparagine 38–histidine 41, threonine 129, arginine 143, glutamine 223, threonine 238, and arginine 302. Residue histidine 41 is the Proton donor of the active site. Threonine 298–arginine 304 is a substrate binding site. GTP-binding positions include arginine 304, lysine 330–aspartate 332, and serine 412–serine 414.

The protein belongs to the adenylosuccinate synthetase family. In terms of assembly, homodimer. Requires Mg(2+) as cofactor.

The protein localises to the cytoplasm. The catalysed reaction is IMP + L-aspartate + GTP = N(6)-(1,2-dicarboxyethyl)-AMP + GDP + phosphate + 2 H(+). The protein operates within purine metabolism; AMP biosynthesis via de novo pathway; AMP from IMP: step 1/2. In terms of biological role, plays an important role in the de novo pathway of purine nucleotide biosynthesis. Catalyzes the first committed step in the biosynthesis of AMP from IMP. In Rhodospirillum rubrum (strain ATCC 11170 / ATH 1.1.1 / DSM 467 / LMG 4362 / NCIMB 8255 / S1), this protein is Adenylosuccinate synthetase.